Consider the following 297-residue polypeptide: MNDLIDDFLHFLIVEKGLSANTIKAYERDLHYFVSYMDTSRTLTDPDTLERNDIVGFMAFARKEGKSPRSVARYIASLRSFFHYLMHDGKMSHDPMIQIETPKQAQSLPKVLNLDDVEKLLSSSDTSTPLGLRDQAMLEILYATGLRVTELVKLKMDDLHLQMGFIQTIGKGDKERIIPLGKTATTVLEQYLEEARPKLRRPKYRNDFVFLNHHGQGLTRQGFWKILKGIAKESGIEKPITPHTLRHSFATHLLENGADLRSVQELLGHADISTTQIYTHVTKLRLKDVYKQFHPRA.

The 86-residue stretch at 1–86 folds into the Core-binding (CB) domain; that stretch reads MNDLIDDFLH…SLRSFFHYLM (86 aa). One can recognise a Tyr recombinase domain in the interval 107-291; the sequence is SLPKVLNLDD…TKLRLKDVYK (185 aa). Residues Arg-147, Lys-171, His-243, Arg-246, and His-269 contribute to the active site. Tyr-278 acts as the O-(3'-phospho-DNA)-tyrosine intermediate in catalysis.

It belongs to the 'phage' integrase family. XerD subfamily. In terms of assembly, forms a cyclic heterotetrameric complex composed of two molecules of XerC and two molecules of XerD.

The protein localises to the cytoplasm. Its function is as follows. Site-specific tyrosine recombinase, which acts by catalyzing the cutting and rejoining of the recombining DNA molecules. The XerC-XerD complex is essential to convert dimers of the bacterial chromosome into monomers to permit their segregation at cell division. It also contributes to the segregational stability of plasmids. The polypeptide is Tyrosine recombinase XerD (Listeria innocua serovar 6a (strain ATCC BAA-680 / CLIP 11262)).